Consider the following 298-residue polypeptide: MFTGSIVALITPMKKSGKIDFDSIKGLIEYHIVNNTSAILAIGTTGENFSLTFEEQCNIVKYIFETCDKKIPVIAGIISSNIENIKKQINFYNKINISGILISTPYYSCPTQNGIFNYFKEISKNTDIPQIIYNNPKRTGCDILPETVSKLSYIKNIIGIKDSSKDLSRVKKIKFFSKKNFCLLCGDDINILDFMQLGGCGVISTAANIIAYESSSLCRLINNRHYYKAEKLYYNILDLYKILLIAPNPTPIKWACNFLGLIKTKYIRLPMIGLNKKEIFMFKKILNKIKLKSKINCI.

Threonine 45 lines the pyruvate pocket. Tyrosine 133 functions as the Proton donor/acceptor in the catalytic mechanism. Lysine 161 serves as the catalytic Schiff-base intermediate with substrate. A pyruvate-binding site is contributed by isoleucine 203.

It belongs to the DapA family. Homotetramer; dimer of dimers.

It localises to the cytoplasm. The catalysed reaction is L-aspartate 4-semialdehyde + pyruvate = (2S,4S)-4-hydroxy-2,3,4,5-tetrahydrodipicolinate + H2O + H(+). It functions in the pathway amino-acid biosynthesis; L-lysine biosynthesis via DAP pathway; (S)-tetrahydrodipicolinate from L-aspartate: step 3/4. Its function is as follows. Catalyzes the condensation of (S)-aspartate-beta-semialdehyde [(S)-ASA] and pyruvate to 4-hydroxy-tetrahydrodipicolinate (HTPA). This is 4-hydroxy-tetrahydrodipicolinate synthase from Wigglesworthia glossinidia brevipalpis.